A 508-amino-acid polypeptide reads, in one-letter code: Histidine ammonia-lyase (508 aa).

The segment at residues 143–145 is a cross-link (5-imidazolinone (Ala-Gly)); sequence ASG. The residue at position 144 (Ser144) is a 2,3-didehydroalanine (Ser).

This sequence belongs to the PAL/histidase family. Contains an active site 4-methylidene-imidazol-5-one (MIO), which is formed autocatalytically by cyclization and dehydration of residues Ala-Ser-Gly.

It is found in the cytoplasm. The enzyme catalyses L-histidine = trans-urocanate + NH4(+). The protein operates within amino-acid degradation; L-histidine degradation into L-glutamate; N-formimidoyl-L-glutamate from L-histidine: step 1/3. The sequence is that of Histidine ammonia-lyase from Anaeromyxobacter dehalogenans (strain 2CP-C).